A 149-amino-acid chain; its full sequence is Hydroalkoxylation enzyme phnH (149 aa).

A signal peptide spans 1 to 18 (MKFTYLVSLAAFAVTALG). Residues Asn33 and Asn127 are each glycosylated (N-linked (GlcNAc...) asparagine).

In terms of assembly, homotetramer.

It carries out the reaction 2,4,7,9-tetrahydroxy-6-methyl-8-(2-methylbut-3-en-2-yl)-1-oxo-1H-phenalen-3-ol = (2'R)-atrovenetin. It functions in the pathway secondary metabolite biosynthesis. Hydroalkoxylation enzyme; part of the gene cluster that mediates the biosynthesis of phenalenones such as herqueinone, compounds that have been reported to treat tumors, bacterial infections and/or mycoses, and rheumatic diseases. The non-reducing polyketide synthase phnA synthesizes the heptaketide backbone and cyclizes it into the angular, hemiketal-containing naphtho-gamma-pyrone prephenalenone. The product template (PT) domain of phnA catalyzes only the C4-C9 aldol condensation, which is unprecedented among known PT domains. The transformation of prephenalenone to phenalenones requires an FAD-dependent monooxygenase phnB, which catalyzes the C2 aromatic hydroxylation of prephenalenone and ring opening of the gamma-pyrone ring simultaneously. Subsequent intramolecular deprotonation of C3 phenolic oxygen accelerates phenalenone ring closure to yield the tricyclic phenalenone core with a C2 hydroxylation. The prenyltransferase phnF further catalyzes reverse C-prenylation of phenalenone by direct electrophilic substitution at C6, or possibly via first a forward O-prenylation of a neighboring phenol in phenalenone, followed by a Claisen rearrangement. The hydroalkoxylation enzyme phnH catalyzes the 5-exo-trig cyclization via acid catalysis after the spontaneous deprotonation of 7-OH, which leads to the formation of the dihydrobenzofuran atrovenetin. Atrovenetin is further converted to deoxyherqueinone by the O-methyltransferase phnC which can methylate C2-OH to stabilize the northern portion of the phenalenone core. Finally, the oxidoreductase phnG converts deoxyherqueinone to herqueinone via C6 hydroxylation. The polypeptide is Hydroalkoxylation enzyme phnH (Penicillium herquei).